The sequence spans 209 residues: MIAIIDYGMGNIRSVEQALKYIGAAYIVTSDKEEIFRSDGVILPGVGAFPKAMDILEEKDLVRMLQEIGRSRKPLLGICLGMQLLFEKSEELQDCNGLSLLPGVIRKLKVPYKIPHMGWNELKKEGEIALWNGVEDGSFVYYVHSYYADCPNEIVYGISDYGVKVPGFVAKGNIYGAQFHPEKSGDIGMQMLKNFKGVVETWKSSQLSI.

The 205-residue stretch at methionine 1–serine 205 folds into the Glutamine amidotransferase type-1 domain. Cysteine 79 functions as the Nucleophile in the catalytic mechanism. Active-site residues include histidine 180 and glutamate 182.

Heterodimer of HisH and HisF.

Its subcellular location is the cytoplasm. The catalysed reaction is 5-[(5-phospho-1-deoxy-D-ribulos-1-ylimino)methylamino]-1-(5-phospho-beta-D-ribosyl)imidazole-4-carboxamide + L-glutamine = D-erythro-1-(imidazol-4-yl)glycerol 3-phosphate + 5-amino-1-(5-phospho-beta-D-ribosyl)imidazole-4-carboxamide + L-glutamate + H(+). It carries out the reaction L-glutamine + H2O = L-glutamate + NH4(+). It functions in the pathway amino-acid biosynthesis; L-histidine biosynthesis; L-histidine from 5-phospho-alpha-D-ribose 1-diphosphate: step 5/9. In terms of biological role, IGPS catalyzes the conversion of PRFAR and glutamine to IGP, AICAR and glutamate. The HisH subunit catalyzes the hydrolysis of glutamine to glutamate and ammonia as part of the synthesis of IGP and AICAR. The resulting ammonia molecule is channeled to the active site of HisF. The chain is Imidazole glycerol phosphate synthase subunit HisH from Bacillus anthracis (strain CDC 684 / NRRL 3495).